We begin with the raw amino-acid sequence, 154 residues long: Fucose mutarotase (154 aa).

His-24 functions as the Proton donor in the catalytic mechanism. Position 32 (Asp-32) interacts with substrate. Residue Asp-69 is part of the active site. Met-79, Tyr-120, Tyr-138, and Asn-140 together coordinate substrate. Tyr-120 is an active-site residue.

Belongs to the RbsD / FucU family. In terms of assembly, mainly homodimer, but also exists as homotetramer, homooctamer, and homodecamer. The homodimeric form seems catalytically inactive.

It catalyses the reaction alpha-L-fucose = beta-L-fucose. It functions in the pathway carbohydrate metabolism; L-fucose metabolism. Functionally, involved in the interconversion between alpha- and beta-L-fucoses. L-Fucose (6-deoxy-L-galactose) exists as alpha-L-fucose (29.5%) and beta-L-fucose (70.5%), the beta-form is metabolized through the salvage pathway. GDP-L-fucose formed either by the de novo or salvage pathways is transported into the endoplasmic reticulum, where it serves as a substrate for N- and O-glycosylations by fucosyltransferases. Fucosylated structures expressed on cell surfaces or secreted in biological fluids are believed to play a critical role in cell-cell adhesion and recognition processes. This is Fucose mutarotase (FUOM) from Homo sapiens (Human).